Consider the following 544-residue polypeptide: Chaperonin GroEL (544 aa).

ATP is bound by residues 30–33 (TLGP), lysine 51, 87–91 (DGTTT), glycine 415, and aspartate 495.

Belongs to the chaperonin (HSP60) family. As to quaternary structure, forms a cylinder of 14 subunits composed of two heptameric rings stacked back-to-back. Interacts with the co-chaperonin GroES.

It localises to the cytoplasm. The catalysed reaction is ATP + H2O + a folded polypeptide = ADP + phosphate + an unfolded polypeptide.. In terms of biological role, together with its co-chaperonin GroES, plays an essential role in assisting protein folding. The GroEL-GroES system forms a nano-cage that allows encapsulation of the non-native substrate proteins and provides a physical environment optimized to promote and accelerate protein folding. This Neisseria meningitidis serogroup C (strain 053442) protein is Chaperonin GroEL.